Consider the following 131-residue polypeptide: MGRYYPVHLKSRCYVCAKCKTHLAFKGHLLSHDYRGKNGPACLFKRVENVIEMEPKTEQMSTGRFIVRHIHCCRCHTYIGWKYVSSYEPSQKFKDGHYILEMQDAVLQRDDPEPDDCFIHPPITFLSSSFS.

The Yippee domain occupies 12–109 (RCYVCAKCKT…LEMQDAVLQR (98 aa)). Zn(2+)-binding residues include C16, C19, C72, and C75.

It belongs to the yippee family.

This Schizosaccharomyces pombe (strain 972 / ATCC 24843) (Fission yeast) protein is Protein yippee-like PJ691.02.